We begin with the raw amino-acid sequence, 204 residues long: Somatotropin (204 aa).

Positions 1-17 are cleaved as a signal peptide; that stretch reads MDKVLFLLFVLSLGVSS. Q18 is modified (pyrrolidone carboxylic acid). A Zn(2+)-binding site is contributed by H36. An intrachain disulfide couples C69 to C177. Position 186 (E186) interacts with Zn(2+). A disulfide bond links C194 and C202.

It belongs to the somatotropin/prolactin family.

Its subcellular location is the secreted. Growth hormone plays an important role in growth control and is involved in the regulation of several anabolic processes. Implicated as an osmoregulatory substance important for seawater adaptation. The protein is Somatotropin (gh) of Trichopodus trichopterus (Three spot gourami).